The sequence spans 125 residues: ATP synthase epsilon chain (125 aa).

The protein belongs to the ATPase epsilon chain family. As to quaternary structure, F-type ATPases have 2 components, CF(1) - the catalytic core - and CF(0) - the membrane proton channel. CF(1) has five subunits: alpha(3), beta(3), gamma(1), delta(1), epsilon(1). CF(0) has three main subunits: a, b and c.

The protein resides in the cell inner membrane. Its function is as follows. Produces ATP from ADP in the presence of a proton gradient across the membrane. This is ATP synthase epsilon chain from Aliarcobacter butzleri (strain RM4018) (Arcobacter butzleri).